The following is a 415-amino-acid chain: Isocitrate dehydrogenase [NADP] (415 aa).

NADP(+) contacts are provided by residues 77–79 (TIT) and R84. Substrate is bound at residue T79. Substrate is bound by residues 96-102 (SPNGTIR), R111, and R134. D254 serves as a coordination point for Mn(2+). Residue K262 coordinates NADP(+). Position 277 (D277) interacts with Mn(2+). NADP(+) is bound by residues 312–317 (GTVTRH) and N330.

Belongs to the isocitrate and isopropylmalate dehydrogenases family. As to quaternary structure, heterodimer. Mg(2+) serves as cofactor. It depends on Mn(2+) as a cofactor.

It localises to the cytoplasm. The catalysed reaction is D-threo-isocitrate + NADP(+) = 2-oxoglutarate + CO2 + NADPH. May supply 2-oxoglutarate for amino acid biosynthesis and ammonia assimilation via the glutamine synthetase/glutamate synthase (GS/GOGAT) pathway. This chain is Isocitrate dehydrogenase [NADP], found in Nicotiana tabacum (Common tobacco).